Reading from the N-terminus, the 287-residue chain is Protease HtpX (287 aa).

A run of 2 helical transmembrane segments spans residues 4 to 24 and 33 to 53; these read IFLL…VMSI and GGLL…SLAI. Position 139 (H139) interacts with Zn(2+). The active site involves E140. Residue H143 coordinates Zn(2+). The next 2 membrane-spanning stretches (helical) occupy residues 154-174 and 195-215; these read LIQG…AGII and AVVF…VAYF. E220 lines the Zn(2+) pocket.

It belongs to the peptidase M48B family. Zn(2+) serves as cofactor.

The protein resides in the cell inner membrane. The polypeptide is Protease HtpX (Shewanella pealeana (strain ATCC 700345 / ANG-SQ1)).